The chain runs to 570 residues: Dihydroxy-acid dehydratase (570 aa).

Cys-61 lines the [2Fe-2S] cluster pocket. Asp-94 is a Mg(2+) binding site. Residue Cys-135 participates in [2Fe-2S] cluster binding. Mg(2+) is bound by residues Asp-136 and Lys-137. The residue at position 137 (Lys-137) is an N6-carboxylysine. Cys-207 serves as a coordination point for [2Fe-2S] cluster. Glu-459 contributes to the Mg(2+) binding site. The active-site Proton acceptor is Ser-485.

The protein belongs to the IlvD/Edd family. In terms of assembly, homodimer. The cofactor is [2Fe-2S] cluster. It depends on Mg(2+) as a cofactor.

The enzyme catalyses (2R)-2,3-dihydroxy-3-methylbutanoate = 3-methyl-2-oxobutanoate + H2O. It catalyses the reaction (2R,3R)-2,3-dihydroxy-3-methylpentanoate = (S)-3-methyl-2-oxopentanoate + H2O. It participates in amino-acid biosynthesis; L-isoleucine biosynthesis; L-isoleucine from 2-oxobutanoate: step 3/4. Its pathway is amino-acid biosynthesis; L-valine biosynthesis; L-valine from pyruvate: step 3/4. In terms of biological role, functions in the biosynthesis of branched-chain amino acids. Catalyzes the dehydration of (2R,3R)-2,3-dihydroxy-3-methylpentanoate (2,3-dihydroxy-3-methylvalerate) into 2-oxo-3-methylpentanoate (2-oxo-3-methylvalerate) and of (2R)-2,3-dihydroxy-3-methylbutanoate (2,3-dihydroxyisovalerate) into 2-oxo-3-methylbutanoate (2-oxoisovalerate), the penultimate precursor to L-isoleucine and L-valine, respectively. In Lactococcus lactis subsp. cremoris (strain SK11), this protein is Dihydroxy-acid dehydratase.